Consider the following 1025-residue polypeptide: Complement receptor type 2 (1025 aa).

An N-terminal signal peptide occupies residues Met1–Glu11. The Sushi 1 domain occupies Ile12 to Ser75. The Extracellular segment spans residues Ile12 to Trp963. Intrachain disulfides connect Cys14–Cys56 and Cys42–Cys73. Residues Asn77 and Asn113 are each glycosylated (N-linked (GlcNAc...) asparagine). Sushi domains are found at residues Ile80–Ser140, Leu144–Glu204, Ala205–Glu265, Ile266–Leu336, Val341–Lys400, Gly401–Val460, Ala461–Glu516, Ile517–Leu587, Val592–Lys651, Glu652–Val706, Ile707–Gln771, Thr776–Arg835, Leu839–Glu899, and Val900–Tyr960. Disulfide bonds link Cys82–Cys124, Cys110–Cys138, Cys146–Cys189, Cys175–Cys202, Cys207–Cys248, Cys234–Cys263, Cys268–Cys317, Cys297–Cys334, Cys343–Cys385, Cys371–Cys398, Cys402–Cys445, Cys431–Cys458, Cys463–Cys501, Cys487–Cys514, Cys519–Cys568, Cys548–Cys585, Cys594–Cys636, Cys622–Cys649, Cys654–Cys689, Cys675–Cys704, Cys709–Cys752, Cys738–Cys769, Cys778–Cys820, Cys806–Cys833, Cys841–Cys884, and Cys870–Cys897. N-linked (GlcNAc...) asparagine glycosylation is found at Asn276, Asn316, Asn364, and Asn380. A glycan (N-linked (GlcNAc...) asparagine) is linked at Asn484. Asn527 is a glycosylation site (N-linked (GlcNAc...) asparagine). N-linked (GlcNAc...) asparagine glycosylation is found at Asn615 and Asn639. Asn694 carries an N-linked (GlcNAc...) asparagine glycan. Asn754, Asn790, Asn813, Asn823, and Asn851 each carry an N-linked (GlcNAc...) asparagine glycan. Residue Asn901 is glycosylated (N-linked (GlcNAc...) asparagine). Cystine bridges form between Cys902–Cys945 and Cys931–Cys958. The helical transmembrane segment at Ser964–Leu990 threads the bilayer. The Cytoplasmic segment spans residues Lys991 to Ser1025.

Belongs to the receptors of complement activation (RCA) family. As to quaternary structure, interacts (via Sushi domain 1 and 2) with C3. Interacts with CD19. Part of a complex composed of CD19, CR2/CD21, CD81 and IFITM1/CD225 in the membrane of mature B-cells. Interacts (via Sushi domain 1 and 2) with FCER2 (via the C-terminus). Interacts with CD23. Interacts with FCRL5. Interacts with CR1. Interacts with INFNA1. B-lymphocytes.

It is found in the cell membrane. Functionally, serves as a receptor for various ligands including complement component CD3d, HNRNPU OR IFNA1. When C3d is bound to antigens, attaches to C3d on B-cell surface and thereby facilitates the recognition and uptake of antigens by B-cells. This interaction enhances B-cell activation and subsequent immune responses. Forms a complex with several partners on the surface of B-cells including CD19, FCRL5 and CD81, to form the B-cell coreceptor complex that plays a crucial role in B-cell activation and signaling. Also induces specific intracellular signaling separately from the BCR and CD19 by activating the tyrosine kinase SRC, which then phosphorylates nucleolin/NCL and triggers AKT and GSK3 kinase activities in a SYK/CD19-independent manner. Acts as a ligand for CD23 (FcepsilonRII), a low-affinity receptor for IgE, which is expressed on B-cells and other immune cells, and thus participates in the regulation of IgE production. The protein is Complement receptor type 2 (Cr2) of Mus musculus (Mouse).